The chain runs to 431 residues: Tryptophan synthase beta chain (431 aa).

Residue lysine 109 is modified to N6-(pyridoxal phosphate)lysine.

It belongs to the TrpB family. In terms of assembly, tetramer of two alpha and two beta chains. It depends on pyridoxal 5'-phosphate as a cofactor.

The enzyme catalyses (1S,2R)-1-C-(indol-3-yl)glycerol 3-phosphate + L-serine = D-glyceraldehyde 3-phosphate + L-tryptophan + H2O. It participates in amino-acid biosynthesis; L-tryptophan biosynthesis; L-tryptophan from chorismate: step 5/5. Its function is as follows. The beta subunit is responsible for the synthesis of L-tryptophan from indole and L-serine. This is Tryptophan synthase beta chain from Deinococcus radiodurans (strain ATCC 13939 / DSM 20539 / JCM 16871 / CCUG 27074 / LMG 4051 / NBRC 15346 / NCIMB 9279 / VKM B-1422 / R1).